A 518-amino-acid chain; its full sequence is Protein PAC2 (518 aa).

The 45-residue stretch at 23-67 (VIKPWPSVKAYGVEWDDHSRGKHSGTIDDIHYFDVQIPNSGSFLK) folds into the CAP-Gly domain. LRR repeat units follow at residues 153-174 (NVKDLDLSLNLFTNINSLCEFI), 179-201 (NLESLNISQNKLLSGWDNLKEYD), 204-227 (HIKTLRLSSCGLSYKHIGKLLKSF), 229-252 (TLKMLDLSYNNLTSAGIQNFENEI), 255-276 (TLEELNISGNNLISFPLFPKNL), 277-298 (TLKGLNVSNNQISRAPSIAIYS), 299-319 (VESLDITDNKFKERSLIDDLN), and 324-345 (SLKNIHLSGNEFNYNGNYINVE).

The protein localises to the cytoplasm. Its subcellular location is the cytoskeleton. Required for viability in the absence of the kinesin-related CIN8 mitotic motor. Seems to be involved in the assembly of alpha-tubulin. This chain is Protein PAC2 (PAC2), found in Saccharomyces cerevisiae (strain ATCC 204508 / S288c) (Baker's yeast).